We begin with the raw amino-acid sequence, 179 residues long: Large ribosomal subunit protein uL6 (179 aa).

Belongs to the universal ribosomal protein uL6 family. In terms of assembly, part of the 50S ribosomal subunit.

Functionally, this protein binds to the 23S rRNA, and is important in its secondary structure. It is located near the subunit interface in the base of the L7/L12 stalk, and near the tRNA binding site of the peptidyltransferase center. The sequence is that of Large ribosomal subunit protein uL6 from Saccharopolyspora erythraea (strain ATCC 11635 / DSM 40517 / JCM 4748 / NBRC 13426 / NCIMB 8594 / NRRL 2338).